The chain runs to 387 residues: Lipid-A-disaccharide synthase (387 aa).

The protein belongs to the LpxB family.

The catalysed reaction is 2-N,3-O-bis[(3R)-3-hydroxytetradecanoyl]-alpha-D-glucosaminyl 1-phosphate + UDP-2-N,3-O-bis[(3R)-3-hydroxytetradecanoyl]-alpha-D-glucosamine = lipid A disaccharide (E. coli) + UDP + H(+). The enzyme catalyses a lipid X + a UDP-2-N,3-O-bis[(3R)-3-hydroxyacyl]-alpha-D-glucosamine = a lipid A disaccharide + UDP + H(+). It participates in glycolipid biosynthesis; lipid IV(A) biosynthesis; lipid IV(A) from (3R)-3-hydroxytetradecanoyl-[acyl-carrier-protein] and UDP-N-acetyl-alpha-D-glucosamine: step 5/6. Condensation of UDP-2,3-diacylglucosamine and 2,3-diacylglucosamine-1-phosphate to form lipid A disaccharide, a precursor of lipid A, a phosphorylated glycolipid that anchors the lipopolysaccharide to the outer membrane of the cell. This chain is Lipid-A-disaccharide synthase, found in Blochmanniella pennsylvanica (strain BPEN).